The following is a 921-amino-acid chain: Isoleucine--tRNA ligase (921 aa).

The 'HIGH' region signature appears at 57–67 (PYANGDIHMGH). Residue glutamate 552 coordinates L-isoleucyl-5'-AMP. The 'KMSKS' region motif lies at 593-597 (KMSKS). Lysine 596 lines the ATP pocket. Cysteine 888, cysteine 891, cysteine 908, and cysteine 911 together coordinate Zn(2+).

This sequence belongs to the class-I aminoacyl-tRNA synthetase family. IleS type 1 subfamily. As to quaternary structure, monomer. Zn(2+) is required as a cofactor.

It is found in the cytoplasm. The catalysed reaction is tRNA(Ile) + L-isoleucine + ATP = L-isoleucyl-tRNA(Ile) + AMP + diphosphate. Functionally, catalyzes the attachment of isoleucine to tRNA(Ile). As IleRS can inadvertently accommodate and process structurally similar amino acids such as valine, to avoid such errors it has two additional distinct tRNA(Ile)-dependent editing activities. One activity is designated as 'pretransfer' editing and involves the hydrolysis of activated Val-AMP. The other activity is designated 'posttransfer' editing and involves deacylation of mischarged Val-tRNA(Ile). The chain is Isoleucine--tRNA ligase from Bacillus cereus (strain 03BB102).